Here is a 443-residue protein sequence, read N- to C-terminus: Signal recognition particle 54 kDa protein (443 aa).

Residues 104–111 (GLQGSGKT), 184–188 (DTAGR), and 242–245 (TKLD) each bind GTP.

It belongs to the GTP-binding SRP family. SRP54 subfamily. Part of the signal recognition particle protein translocation system, which is composed of SRP and FtsY. Archaeal SRP consists of a 7S RNA molecule of 300 nucleotides and two protein subunits: SRP54 and SRP19.

The protein resides in the cytoplasm. The enzyme catalyses GTP + H2O = GDP + phosphate + H(+). Functionally, involved in targeting and insertion of nascent membrane proteins into the cytoplasmic membrane. Binds to the hydrophobic signal sequence of the ribosome-nascent chain (RNC) as it emerges from the ribosomes. The SRP-RNC complex is then targeted to the cytoplasmic membrane where it interacts with the SRP receptor FtsY. The protein is Signal recognition particle 54 kDa protein of Methanosarcina barkeri (strain Fusaro / DSM 804).